Here is a 204-residue protein sequence, read N- to C-terminus: Large ribosomal subunit protein uL13 (204 aa).

Belongs to the universal ribosomal protein uL13 family.

This is Large ribosomal subunit protein uL13 (RpL13A) from Spodoptera frugiperda (Fall armyworm).